Here is a 195-residue protein sequence, read N- to C-terminus: ATP-dependent Clp protease proteolytic subunit (195 aa).

S98 (nucleophile) is an active-site residue. Residue H123 is part of the active site.

This sequence belongs to the peptidase S14 family. As to quaternary structure, fourteen ClpP subunits assemble into 2 heptameric rings which stack back to back to give a disk-like structure with a central cavity, resembling the structure of eukaryotic proteasomes.

The protein resides in the cytoplasm. It catalyses the reaction Hydrolysis of proteins to small peptides in the presence of ATP and magnesium. alpha-casein is the usual test substrate. In the absence of ATP, only oligopeptides shorter than five residues are hydrolyzed (such as succinyl-Leu-Tyr-|-NHMec, and Leu-Tyr-Leu-|-Tyr-Trp, in which cleavage of the -Tyr-|-Leu- and -Tyr-|-Trp bonds also occurs).. Cleaves peptides in various proteins in a process that requires ATP hydrolysis. Has a chymotrypsin-like activity. Plays a major role in the degradation of misfolded proteins. This is ATP-dependent Clp protease proteolytic subunit from Caldanaerobacter subterraneus subsp. tengcongensis (strain DSM 15242 / JCM 11007 / NBRC 100824 / MB4) (Thermoanaerobacter tengcongensis).